A 154-amino-acid polypeptide reads, in one-letter code: Large ribosomal subunit protein uL13 (154 aa).

The segment at 129 to 154 (SQHPHEAQQPEALDVGTLNRKNKRIA) is disordered.

This sequence belongs to the universal ribosomal protein uL13 family. In terms of assembly, part of the 50S ribosomal subunit.

Functionally, this protein is one of the early assembly proteins of the 50S ribosomal subunit, although it is not seen to bind rRNA by itself. It is important during the early stages of 50S assembly. The sequence is that of Large ribosomal subunit protein uL13 from Bartonella bacilliformis (strain ATCC 35685 / KC583 / Herrer 020/F12,63).